Consider the following 913-residue polypeptide: Anoctamin-5 (913 aa).

Residues 1-299 (MGDPDLLEVL…DLIKNYYGEK (299 aa)) lie on the Cytoplasmic side of the membrane. Residues 300 to 320 (IGIYFVFLGFYTEMLFFAAVV) form a helical membrane-spanning segment. The Extracellular segment spans residues 321-380 (GLACFIYGLLSMEHNTSSTEICDPEIGGQMIMCPLCDQVCDYWRLNSTCLASKFSHLFDN). N335, N366, and N380 each carry an N-linked (GlcNAc...) asparagine glycan. The helical transmembrane segment at 381–401 (ESTVFFAIFMGIWVTLFLEFW) threads the bilayer. Residues 402-462 (KQRQARLEYE…YTRIPWYFLS (61 aa)) are Cytoplasmic-facing. The chain crosses the membrane as a helical span at residues 463-483 (GATVTLWMSLVVTSMVAVIVY). Residues 484-511 (RLSVFATFASFMESDASLKQVKSFLTPQ) lie on the Extracellular side of the membrane. A helical transmembrane segment spans residues 512 to 532 (ITTSLTGSCLNFIVILILNFF). Over 533-557 (YEKISAWITKMEIPRTYQEYESSLT) the chain is Cytoplasmic. A helical transmembrane segment spans residues 558 to 578 (LKMFLFQFVNFYSSCFYVAFF). The Extracellular segment spans residues 579-679 (KGKFVGYPGK…FYEYLETVTQ (101 aa)). A helical transmembrane segment spans residues 680-700 (FGFVTLFVASFPLAPLLALIN). The Cytoplasmic portion of the chain corresponds to 701–732 (NIVEIRVDAWKLTTQYRRTVASKAHSIGVWQD). Residues 733–753 (ILYGMAVLSVATNAFIVAFTS) form a helical membrane-spanning segment. The Extracellular segment spans residues 754–834 (DIIPRLVYYY…FWHVLAAKMT (81 aa)). Residues N768, N778, and N791 are each glycosylated (N-linked (GlcNAc...) asparagine). The helical transmembrane segment at 835–855 (FIIVMEHVVFLVKFLLAWMIP) threads the bilayer. Residues 856–913 (DVPKDVVERIKREKLMTIKILHDFELNKLKENLGINSNEFAKHVMIEENKAQLAKSTL) lie on the Cytoplasmic side of the membrane.

It belongs to the anoctamin family. In terms of tissue distribution, highly expressed in brain, heart, kidney, lung, and skeletal muscle. Weakly expressed in bone marrow, fetal liver, placenta, spleen, thymus, osteoblasts and periodontal ligament cells.

Its subcellular location is the endoplasmic reticulum membrane. The protein localises to the cell membrane. In terms of biological role, plays a role in plasma membrane repair in a process involving annexins. Does not exhibit calcium-activated chloride channel (CaCC) activity. This Homo sapiens (Human) protein is Anoctamin-5 (ANO5).